A 477-amino-acid polypeptide reads, in one-letter code: Protein kinase C and casein kinase substrate in neurons protein 2 (477 aa).

The F-BAR domain occupies 11-282 (VEVSSDSFWE…AIKSADAMED (272 aa)). Residues 25–274 (KRTVKRIDDG…SIYRELEYAI (250 aa)) adopt a coiled-coil conformation. Composition is skewed to basic and acidic residues over residues 163–176 (CKEEKLATSRETNS) and 186–216 (QLKKLQDKVEKSKQDSQKTKEKYEKSLKDLD). 2 disordered regions span residues 163-218 (CKEE…LDGT) and 314-412 (RREK…PFDE). The segment covering 328–341 (GISQSGEQSSIQNQ) has biased composition (low complexity). The span at 342-357 (HSSHLSVQSAQSTNNP) shows a compositional bias: polar residues. An NPF1 motif is present at residues 356-358 (NPF). Residues 370–388 (TENKKIENVGSYEKTHPAE) are compositionally biased toward basic and acidic residues. Residues 395–407 (NNPFNPSDTNGDN) show a composition bias toward polar residues. An NPF2 motif is present at residues 396 to 398 (NPF). The NPF3 motif lies at 408–410 (NPF). The SH3 domain maps to 417 to 477 (TLEVRVRALY…YPANYVESVQ (61 aa)).

The protein belongs to the PACSIN family. As to quaternary structure, interacts with adam13 through the SH3 domains. Post-translationally, phosphorylated. Ubiquitously expressed with higher expression in the ectoderm, the neuroectoderm, and dorsal mesoderm layers.

It is found in the cytoplasm. Its subcellular location is the cytoskeleton. The protein localises to the cytoplasmic vesicle membrane. It localises to the cell projection. The protein resides in the ruffle membrane. It is found in the early endosome. Its subcellular location is the recycling endosome membrane. The protein localises to the cell membrane. It localises to the membrane. The protein resides in the caveola. It is found in the cell junction. Its subcellular location is the adherens junction. Regulates the morphogenesis and endocytosis of caveolae. Lipid-binding protein that is able to promote the tubulation of the phosphatidic acid-containing membranes it preferentially binds. Plays a role in intracellular vesicle-mediated transport. Involved in the endocytosis of cell-surface receptors like the EGF receptor, contributing to its internalization in the absence of EGF stimulus. This Xenopus laevis (African clawed frog) protein is Protein kinase C and casein kinase substrate in neurons protein 2 (pacsin2).